The sequence spans 984 residues: Ephrin type-B receptor 1 (984 aa).

Positions 1 to 17 (MALDCLLLFLLASAVAA) are cleaved as a signal peptide. The Extracellular segment spans residues 18-540 (MEETLMDTRT…YKSELREQLP (523 aa)). Positions 19–201 (EETLMDTRTA…FFKKCPSIVQ (183 aa)) constitute an Eph LBD domain. 2 consecutive Fibronectin type-III domains span residues 322 to 432 (VPSG…TNQA) and 433 to 528 (APST…TLTD). Residues N334, N426, and N480 are each glycosylated (N-linked (GlcNAc...) asparagine). A helical transmembrane segment spans residues 541–563 (LIAGSAAAGVVFVVSLVAISIVC). Residues 564–984 (SRKRAYSKEA…QMNQSPSVMA (421 aa)) are Cytoplasmic-facing. Y600 is subject to Phosphotyrosine. Positions 619-882 (VKIEEVIGAG…EIVNTLDKMI (264 aa)) constitute a Protein kinase domain. ATP contacts are provided by residues 625–633 (IGAGEFGEV) and K651. The Proton acceptor role is filled by D744. The 65-residue stretch at 911–975 (TAFTTVDDWL…LSSIHSMRVQ (65 aa)) folds into the SAM domain. At Y928 the chain carries Phosphotyrosine; by autocatalysis. The PDZ-binding signature appears at 982-984 (VMA).

Belongs to the protein kinase superfamily. Tyr protein kinase family. Ephrin receptor subfamily. In terms of assembly, heterotetramer upon binding of the ligand. The heterotetramer is composed of an ephrin dimer and a receptor dimer. Oligomerization is probably required to induce biological responses. Interacts with EPHB6; transphosphorylates EPHB6 to form an active signaling complex. Interacts with PICK1. Interacts (through Tyr-594) with NCK1 (via SH2 domain); activates the JUN cascade to regulate cell adhesion. The ligand-activated form interacts (through Tyr-928) with GRB7 and GRB10 (via SH2 domains). The ligand-activated form interacts (residues within the catalytic domain) with GRB2 (via SH2 domain). Interacts with GRB2, SHC1 and SRC; activates the MAPK/ERK cascade to regulate cell migration. Interacts with CBL; regulates receptor degradation through ubiquitination. Interacts with ACP1. Phosphorylated. Autophosphorylation is stimulated by the ligand EFNB1. Required for interaction with SH2 domain-containing interactors, for activation of the MAPK/ERK and JUN signaling cascades and for ubiquitination by CBL. In terms of processing, ubiquitinated; (EFNB1)ligand-induced poly- and/or multi-ubiquitination by CBL is regulated by SRC and leads to lysosomal degradation. Expressed in neural stem and progenitor cells in the dentate gyrus. Expressed in myogenic progenitor cells.

It is found in the cell membrane. Its subcellular location is the early endosome membrane. It localises to the cell projection. The protein localises to the dendrite. The enzyme catalyses L-tyrosyl-[protein] + ATP = O-phospho-L-tyrosyl-[protein] + ADP + H(+). In terms of biological role, receptor tyrosine kinase which binds promiscuously transmembrane ephrin-B family ligands residing on adjacent cells, leading to contact-dependent bidirectional signaling into neighboring cells. The signaling pathway downstream of the receptor is referred to as forward signaling while the signaling pathway downstream of the ephrin ligand is referred to as reverse signaling. Cognate/functional ephrin ligands for this receptor include EFNB1, EFNB2 and EFNB3. During nervous system development, regulates retinal axon guidance redirecting ipsilaterally ventrotemporal retinal ganglion cells axons at the optic chiasm midline. This probably requires repulsive interaction with EFNB2. In the adult nervous system together with EFNB3, regulates chemotaxis, proliferation and polarity of the hippocampus neural progenitors. In addition to its role in axon guidance also plays an important redundant role with other ephrin-B receptors in development and maturation of dendritic spines and synapse formation. May also regulate angiogenesis. More generally, may play a role in targeted cell migration and adhesion. Upon activation by EFNB1 and probably other ephrin-B ligands activates the MAPK/ERK and the JNK signaling cascades to regulate cell migration and adhesion respectively. Involved in the maintenance of the pool of satellite cells (muscle stem cells) by promoting their self-renewal and reducing their activation and differentiation. This is Ephrin type-B receptor 1 (Ephb1) from Mus musculus (Mouse).